An 853-amino-acid chain; its full sequence is Cytochrome P450 monooxygenase mpaDE' (853 aa).

Residues 1-6 (MESLSL) are Lumenal-facing. Residues 7 to 29 (TWITAIAVVLYLVQRYVRSYWRL) form a helical membrane-spanning segment. The Cytoplasmic segment spans residues 30–853 (KDIPGPVLAK…DIENAIEGQK (824 aa)). A heme-binding site is contributed by cysteine 449.

This sequence belongs to the cytochrome P450 family. It depends on heme as a cofactor.

Its subcellular location is the endoplasmic reticulum membrane. The catalysed reaction is 5-methylorsellinate + reduced [NADPH--hemoprotein reductase] + O2 = 4,6-dihydroxy-2-(hydroxymethyl)-3-methylbenzoate + oxidized [NADPH--hemoprotein reductase] + H2O + H(+). It carries out the reaction 4,6-dihydroxy-2-(hydroxymethyl)-3-methylbenzoate + H(+) = 5,7-dihydroxy-4-methylphthalide + H2O. It participates in secondary metabolite biosynthesis; terpenoid biosynthesis. In terms of biological role, cytochrome P450 monooxygenase; part of the gene cluster that mediates the biosynthesis of mycophenolic acid (MPA), the first isolated antibiotic natural product in the world obtained from a culture of Penicillium brevicompactum in 1893. MpaDE' is an endoplasmic reticulum-bound enzyme that catalyzes the conversion of 5-methylorsellinic acid (5MOA) into the phthalide compound 5,7-dihydroxy-4,6-dimethylphthalide (DHMP). MpaDE' first catalyzes hydroxylation of 5-MOA to 4,6-dihydroxy-2-(hydroxymethyl)-3-methylbenzoic acid (DHMB), and then acts as a lactone synthase that catalyzes the ring closure to convert DHMB into DHMP. The first step of the pathway is the synthesis of 5-methylorsellinic acid (5MOA) by the cytosolic polyketide synthase mpaC. 5MOA is then converted to the phthalide compound 5,7-dihydroxy-4,6-dimethylphthalide (DHMP) by the endoplasmic reticulum-bound cytochrome P450 monooxygenase mpaDE. MpaDE first catalyzes hydroxylation of 5-MOA to 4,6-dihydroxy-2-(hydroxymethyl)-3-methylbenzoic acid (DHMB). MpaDE then acts as a lactone synthase that catalyzes the ring closure to convert DHMB into DHMP. The next step is the prenylation of DHMP by the Golgi apparatus-associated prenyltransferase mpaA to yield farnesyl-DHMP (FDHMP). The ER-bound oxygenase mpaB then mediates the oxidative cleavage the C19-C20 double bond in FDHMP to yield FDHMP-3C via a mycophenolic aldehyde intermediate. The O-methyltransferase mpaG catalyzes the methylation of FDHMP-3C to yield MFDHMP-3C. After the cytosolic methylation of FDHMP-3C, MFDHMP-3C enters into peroxisomes probably via free diffusion due to its low molecular weight. Upon a peroxisomal CoA ligation reaction, catalyzed by a beta-oxidation component enzyme acyl-CoA ligase ACL891, MFDHMP-3C-CoA would then be restricted to peroxisomes for the following beta-oxidation pathway steps. The peroxisomal beta-oxidation machinery than converts MFDHMP-3C-CoA into MPA_CoA, via a beta-oxidation chain-shortening process. Finally mpaH acts as a peroxisomal acyl-CoA hydrolase with high substrate specificity toward MPA-CoA to release the final product MPA. The chain is Cytochrome P450 monooxygenase mpaDE' from Penicillium brevicompactum.